The following is a 365-amino-acid chain: Outer capsid protein sigma-3 (365 aa).

Residues 51–73 (CMHCLGVVGSLQRKLKHLPHHRC) form a CCHC-type zinc finger.

This sequence belongs to the orthoreovirus sigma-3 protein family. As to quaternary structure, heterohexamer of three sigma-3 and three Mu-1 proteins. The RNA-binding form is probably a homodimer. Cleaved during virus the endosomal proteolytic disassembly of the outer capsid.

Its subcellular location is the virion. It localises to the host cytoplasm. The protein localises to the host nucleus. Stimulates translation by blocking the activation of the dsRNA-dependent protein kinase EIF2AK2/PKR, thereby inhibiting the host interferon response. Sigma3 prevents the activation of EIF2AK2 by competing with the kinase for dsRNA-binding. In terms of biological role, the viral outer shell polypeptides, of which sigma-3 is one, impose structural constraints that prevent elongation of nascent transcripts by the RNA-dependent RNA polymerase lambda-3. This chain is Outer capsid protein sigma-3 (S4), found in Reovirus type 3 (strain Dearing) (T3D).